A 67-amino-acid polypeptide reads, in one-letter code: Phycobilisome 7.8 kDa linker polypeptide, allophycocyanin-associated, core (67 aa).

In terms of domain architecture, CpcD-like spans 1-56; it reads MRMFRITACVPSQTRIRTQRELQNTYFTKLVPYDNWFREQQRIMKMGGKIVKVELA.

Belongs to the phycobilisome linker protein family.

Its subcellular location is the cellular thylakoid membrane. Its function is as follows. Rod linker protein, associated with allophycocyanin. Linker polypeptides determine the state of aggregation and the location of the disk-shaped phycobiliprotein units within the phycobilisome and modulate their spectroscopic properties in order to mediate a directed and optimal energy transfer. In Synechocystis sp. (strain PCC 6714) (Aphanocapsa sp. (strain PCC 6714)), this protein is Phycobilisome 7.8 kDa linker polypeptide, allophycocyanin-associated, core (apcC).